We begin with the raw amino-acid sequence, 79 residues long: ATP synthase subunit c (79 aa).

The next 2 membrane-spanning stretches (helical) occupy residues 11–31 (MAAA…IGIL) and 53–73 (FFIV…LGLY).

Belongs to the ATPase C chain family. In terms of assembly, F-type ATPases have 2 components, F(1) - the catalytic core - and F(0) - the membrane proton channel. F(1) has five subunits: alpha(3), beta(3), gamma(1), delta(1), epsilon(1). F(0) has three main subunits: a(1), b(2) and c(10-14). The alpha and beta chains form an alternating ring which encloses part of the gamma chain. F(1) is attached to F(0) by a central stalk formed by the gamma and epsilon chains, while a peripheral stalk is formed by the delta and b chains.

The protein localises to the cell inner membrane. F(1)F(0) ATP synthase produces ATP from ADP in the presence of a proton or sodium gradient. F-type ATPases consist of two structural domains, F(1) containing the extramembraneous catalytic core and F(0) containing the membrane proton channel, linked together by a central stalk and a peripheral stalk. During catalysis, ATP synthesis in the catalytic domain of F(1) is coupled via a rotary mechanism of the central stalk subunits to proton translocation. In terms of biological role, key component of the F(0) channel; it plays a direct role in translocation across the membrane. A homomeric c-ring of between 10-14 subunits forms the central stalk rotor element with the F(1) delta and epsilon subunits. In Serratia proteamaculans (strain 568), this protein is ATP synthase subunit c.